A 394-amino-acid chain; its full sequence is Suppressor APC domain-containing protein 2 (394 aa).

Disordered stretches follow at residues 1–23, 95–125, and 150–188; these read MAGA…STEG, LLSA…RLVF, and GPSA…SSSA. The span at 177-188 shows a compositional bias: polar residues; the sequence is SQSAALEPSSSA. Phosphothreonine is present on Thr219. Positions 227 to 277 form a coiled coil; it reads GLLKQMKELEQEKEVLLQGLEMMARGRDWYQQQLQRVQERQRRLGQSRASA. Phosphoserine is present on Ser284. A coiled-coil region spans residues 336–384; the sequence is QQQTILMLKEQNRLLTQEVTEKSERITQLEQEKSALIKQLFEARALSQQ.

Interacts with a spindle orientation complex at least composed of GNAI1, GPSM2 and NUMA1. Interacts with GPSM2 (via TPR motifs); this interaction is required to prevent GPSM2 anchoring at the mitotic apical cortex and is inhibited in presence of NUMA1 in a dose dependent manner. Interacts with PARD3. As to expression, expressed in 5-month-old fetal tissues, including stomach, intestine, colon, liver, brain, lung, heart, spleen and kidney. Undetectable in non-cancerous adult tissues. Expressed in many primary gastric carcinoma, but almost not in adjacent normal mucosa. Expressed preferentially in M and G1 phases, compared to S and G2 phases. Expression is up-regulated in hepatocellular carcinoma (HCC) and colorectal cancer (CRC) tissues (at protein level).

It localises to the cytoplasm. It is found in the nucleus. The protein localises to the cell cortex. Its subcellular location is the apical cell membrane. The protein resides in the cell junction. It localises to the tight junction. Functionally, plays a role in planar mitotic spindle orientation in retinal progenitor cells (RPCs) and promotes the production of symmetric terminal divisions. Negatively regulates the mitotic apical cortex localization of GPSM2. Involved also in positive regulation of cell proliferation and tumor cell growth. The sequence is that of Suppressor APC domain-containing protein 2 from Homo sapiens (Human).